Consider the following 393-residue polypeptide: Riboflavin biosynthesis protein RibBA (393 aa).

A DHBP synthase region spans residues 1–200 (MQLDSIDTAL…IEDLEKYRKS (200 aa)). D-ribulose 5-phosphate is bound by residues 27–28 (RE), Asp32, 139–143 (RRGHT), and Glu163. Glu28 provides a ligand contact to Mg(2+). His142 lines the Mg(2+) pocket. The interval 201–393 (SISKLDAKAK…TKKEKMGHLI (193 aa)) is GTP cyclohydrolase II. GTP is bound at residue 249 to 253 (RIHSA). Zn(2+)-binding residues include Cys254, Cys265, and Cys267. Residues Gln270, 291 to 293 (EGR), and Thr313 contribute to the GTP site. Residue Asp325 is the Proton acceptor; for GTP cyclohydrolase activity of the active site. Arg327 functions as the Nucleophile; for GTP cyclohydrolase activity in the catalytic mechanism. GTP is bound by residues Ser348 and Lys353.

This sequence in the N-terminal section; belongs to the DHBP synthase family. The protein in the C-terminal section; belongs to the GTP cyclohydrolase II family. Requires Mg(2+) as cofactor. The cofactor is Mn(2+). Zn(2+) is required as a cofactor.

The catalysed reaction is D-ribulose 5-phosphate = (2S)-2-hydroxy-3-oxobutyl phosphate + formate + H(+). It carries out the reaction GTP + 4 H2O = 2,5-diamino-6-hydroxy-4-(5-phosphoribosylamino)-pyrimidine + formate + 2 phosphate + 3 H(+). It participates in cofactor biosynthesis; riboflavin biosynthesis; 2-hydroxy-3-oxobutyl phosphate from D-ribulose 5-phosphate: step 1/1. It functions in the pathway cofactor biosynthesis; riboflavin biosynthesis; 5-amino-6-(D-ribitylamino)uracil from GTP: step 1/4. Catalyzes the conversion of D-ribulose 5-phosphate to formate and 3,4-dihydroxy-2-butanone 4-phosphate. Its function is as follows. Catalyzes the conversion of GTP to 2,5-diamino-6-ribosylamino-4(3H)-pyrimidinone 5'-phosphate (DARP), formate and pyrophosphate. The protein is Riboflavin biosynthesis protein RibBA of Staphylococcus saprophyticus subsp. saprophyticus (strain ATCC 15305 / DSM 20229 / NCIMB 8711 / NCTC 7292 / S-41).